The sequence spans 279 residues: Pleckstrin homology domain-containing family F member 1 (279 aa).

The PH domain maps to 35 to 131 (VLLGEGVLTK…WISHIEECVR (97 aa)). Residues 152 to 212 (DKATDICMRC…VCSLCYRELA (61 aa)) form an FYVE-type zinc finger. Residues C158, C161, C175, C178, C183, C186, C204, and C207 each contribute to the Zn(2+) site. The disordered stretch occupies residues 220–263 (AREGIGGSPPQLSHLGGTVCGASSGDDDDSDEDREGNGDGDWPT). Residues 244-253 (GDDDDSDEDR) are compositionally biased toward acidic residues.

As to expression, widely expressed.

It localises to the nucleus. The protein resides in the cytoplasm. The protein localises to the perinuclear region. It is found in the lysosome. In terms of biological role, may induce apoptosis through the lysosomal-mitochondrial pathway. Translocates to the lysosome initiating the permeabilization of lysosomal membrane (LMP) and resulting in the release of CTSD and CTSL to the cytoplasm. Triggers the caspase-independent apoptosis by altering mitochondrial membrane permeabilization (MMP) resulting in the release of PDCD8. This is Pleckstrin homology domain-containing family F member 1 (Plekhf1) from Mus musculus (Mouse).